The sequence spans 463 residues: Siroheme synthase (463 aa).

The segment at methionine 1 to leucine 203 is precorrin-2 dehydrogenase /sirohydrochlorin ferrochelatase. Residues glutamate 22–isoleucine 23 and proline 43–glutamate 44 contribute to the NAD(+) site. Position 128 is a phosphoserine (serine 128). The segment at glycine 216 to serine 463 is uroporphyrinogen-III C-methyltransferase. Proline 225 is an S-adenosyl-L-methionine binding site. The Proton acceptor role is filled by aspartate 248. The active-site Proton donor is the lysine 270. S-adenosyl-L-methionine-binding positions include glycine 301–aspartate 303, isoleucine 306, threonine 331–alanine 332, methionine 383, and glycine 412.

The protein in the N-terminal section; belongs to the precorrin-2 dehydrogenase / sirohydrochlorin ferrochelatase family. It in the C-terminal section; belongs to the precorrin methyltransferase family.

The enzyme catalyses uroporphyrinogen III + 2 S-adenosyl-L-methionine = precorrin-2 + 2 S-adenosyl-L-homocysteine + H(+). The catalysed reaction is precorrin-2 + NAD(+) = sirohydrochlorin + NADH + 2 H(+). It carries out the reaction siroheme + 2 H(+) = sirohydrochlorin + Fe(2+). Its pathway is cofactor biosynthesis; adenosylcobalamin biosynthesis; precorrin-2 from uroporphyrinogen III: step 1/1. It functions in the pathway cofactor biosynthesis; adenosylcobalamin biosynthesis; sirohydrochlorin from precorrin-2: step 1/1. It participates in porphyrin-containing compound metabolism; siroheme biosynthesis; precorrin-2 from uroporphyrinogen III: step 1/1. The protein operates within porphyrin-containing compound metabolism; siroheme biosynthesis; siroheme from sirohydrochlorin: step 1/1. Its pathway is porphyrin-containing compound metabolism; siroheme biosynthesis; sirohydrochlorin from precorrin-2: step 1/1. Multifunctional enzyme that catalyzes the SAM-dependent methylations of uroporphyrinogen III at position C-2 and C-7 to form precorrin-2 via precorrin-1. Then it catalyzes the NAD-dependent ring dehydrogenation of precorrin-2 to yield sirohydrochlorin. Finally, it catalyzes the ferrochelation of sirohydrochlorin to yield siroheme. This is Siroheme synthase from Pseudomonas entomophila (strain L48).